Consider the following 29-residue polypeptide: Brevinin-2Rd (29 aa).

A disulfide bridge connects residues cysteine 23 and cysteine 29.

As to expression, expressed by the skin glands.

It localises to the secreted. In terms of biological role, antimicrobial peptide. This chain is Brevinin-2Rd, found in Pelophylax ridibundus (Marsh frog).